Consider the following 2541-residue polypeptide: Talin-1 (2541 aa).

Positions 86–403 (RPLKIRMLDG…GYIDIILKKK (318 aa)) constitute an FERM domain. Phosphothreonine is present on Thr167. Positions 280-435 (FQAHKNCGQM…PKKSTVLQQQ (156 aa)) are interaction with LAYN. Phosphoserine occurs at positions 405, 425, 446, 620, and 729. The interval 482 to 655 (RGHMPPLTSA…QASGELLQQI (174 aa)) is helical bundle R1. Residues 656-786 (GESDTDPHFQ…ALNELLQHVK (131 aa)) form a helical bundle R2 region. The helical bundle R3 stretch occupies residues 787-911 (AHATGAGPAG…NAAAQNAIKK (125 aa)). The helical bundle R4 stretch occupies residues 913 to 1044 (LVQRLEHAAK…RTAAQKAQEA (132 aa)). The residue at position 1021 (Ser1021) is a Phosphoserine. Residues 1046–1206 (GPLEMDSALS…NRCVSCLPGQ (161 aa)) form a helical bundle R5 region. Tyr1116 carries the post-translational modification Phosphotyrosine. The residue at position 1142 (Thr1142) is a Phosphothreonine. Phosphoserine is present on residues Ser1201 and Ser1225. Residues 1207 to 1357 (RDVDNALRAV…QLITMCTQQA (151 aa)) are helical bundle R6. Thr1263 is modified (phosphothreonine). A phosphoserine mark is found at Ser1323 and Ser1328. The segment at 1327–1948 (ASPNLKSQLA…CSPSDVYTKK (622 aa)) is interaction with SYNM. The helical bundle R7A; Interaction with KANK1 stretch occupies residues 1358-1453 (PGQKECDNAL…AYLVGVSDPN (96 aa)). Residues 1359 to 1659 (GQKECDNALR…SMRDKAPGQL (301 aa)) form an interaction with VCL and F-actin region. Residues 1461-1580 (LVEPTQFARA…NLSAFASNPE (120 aa)) form a helical bundle R8 region. Lys1544 is modified (N6-acetyllysine). The tract at residues 1581–1653 (FSSVPAQISP…IKKLITSMRD (73 aa)) is helical bundle R7B; Interaction with KANK1. Positions 1655-1822 (APGQLECETA…TLNEAASAAG (168 aa)) are helical bundle R9. Positions 1823-1973 (VVGGMVDSIT…VLAALQAGNR (151 aa)) are helical bundle R10. Phosphoserine is present on Ser1849. At Thr1855 the chain carries Phosphothreonine. A Phosphoserine modification is found at Ser1878. Positions 1974–2140 (GTQACITAAS…TVKAVEDEAT (167 aa)) are helical bundle R11. Lys2031 bears the N6-acetyllysine mark. Ser2040 is modified (phosphoserine). Position 2115 is an N6-acetyllysine (Lys2115). A helical bundle R12 region spans residues 2141 to 2294 (KGTRALEATT…QAAEAMKGTE (154 aa)). Residues 2293–2533 (TEWVDPEDPT…QIRQQQYKFL (241 aa)) enclose the I/LWEQ domain. The helical bundle R13 stretch occupies residues 2300–2482 (DPTVIAENEL…AAQKAAAFED (183 aa)).

In terms of assembly, part of a complex composed of THSD1, PTK2/FAK1, TLN1 and VCL. Interacts with THSD1; this promotes interaction with PTK2/FAK1 and VCL. Interacts with NRAP and LAYN. Interacts with SYNM. Interacts with ITGB1; the interaction is prevented by competitive binding of ITGB1BP1. Binds with high affinity to VCL and with low affinity to integrins. Interacts with APBB1IP; this inhibits VCL binding. Interacts with PTK2/FAK1. Interacts with PIP5K1C. Interacts with F-actin. Interacts with SVEP1. Interacts (via R7 domain) with KANK1 or KANK2 (via KN motif); this interaction likely initiates the assembly of cortical microtubule stabilization complexes (CMSCs) at the vicinity of focal adhesions.

The protein localises to the cell projection. It is found in the ruffle membrane. Its subcellular location is the cytoplasm. The protein resides in the cytoskeleton. It localises to the cell surface. The protein localises to the cell junction. It is found in the focal adhesion. In terms of biological role, high molecular weight cytoskeletal protein concentrated at regions of cell-matrix and cell-cell contacts. Involved in connections of major cytoskeletal structures to the plasma membrane. With KANK1 co-organize the assembly of cortical microtubule stabilizing complexes (CMSCs) positioned to control microtubule-actin crosstalk at focal adhesions (FAs) rims. In Mus musculus (Mouse), this protein is Talin-1 (Tln1).